Consider the following 562-residue polypeptide: Vacuolar basic amino acid transporter 1 (562 aa).

Over 1 to 30 the chain is Vacuolar; sequence MQTLDETSNLLPPPEEAEAPPLEQKFHEYN. The helical transmembrane segment at 31–51 threads the bilayer; sequence LALPKFPILFSLWLGSFLSSL. Over 52–100 the chain is Cytoplasmic; that stretch reads DSTIVANIMNRVAEEFSESSKKQWIATSFLLTNTAFQPLYGKLSDITGR. A helical membrane pass occupies residues 101 to 121; sequence KSALLTAQFFFGLGCLLTCFA. The Vacuolar segment spans residues 122 to 131; sequence RNVTEFSIAR. N123 is a glycosylation site (N-linked (GlcNAc...) asparagine). The chain crosses the membrane as a helical span at residues 132-152; the sequence is AICGIGAGGLNAISSIAVSDI. At 153-166 the chain is on the cytoplasmic side; sequence CTARERGVYQGYAN. The chain crosses the membrane as a helical span at residues 167–187; that stretch reads IVFGFGQLLGAPLGGVFIETI. Residues 188 to 190 lie on the Vacuolar side of the membrane; that stretch reads GWR. The helical transmembrane segment at 191 to 211 threads the bilayer; the sequence is ALFGIQVPVIMLCSVLAIKNI. The Cytoplasmic portion of the chain corresponds to 212–232; sequence NIKLFHVPPMKERYTLKNLSR. Residues 233–253 form a helical membrane-spanning segment; sequence IDIFGSLSLVATISGVLFLCS. The Vacuolar segment spans residues 254-255; the sequence is SQ. The helical transmembrane segment at 256 to 276 threads the bilayer; the sequence is LNKLYLALFTIGSFIVFILVE. The Cytoplasmic portion of the chain corresponds to 277 to 292; sequence RYYATEKILPFELLTR. A helical membrane pass occupies residues 293 to 313; that stretch reads SFCLSSAVTVISSFVVFGEIF. The Vacuolar segment spans residues 314 to 331; it reads RSPIYLQLLQNISVTKTG. An N-linked (GlcNAc...) asparagine glycan is attached at N324. The chain crosses the membrane as a helical span at residues 332 to 352; it reads LFLIFPSISVAVGSLVTGWVL. The Cytoplasmic portion of the chain corresponds to 353 to 365; sequence RNTKINLAHCAYQ. A helical transmembrane segment spans residues 366–386; sequence IIFGGMIMQLLGLGLGYFLLS. Topologically, residues 387–419 are vacuolar; that stretch reads HLNPDYTIYDMLESITFRSNSIWWKLIYVFASV. The chain crosses the membrane as a helical span at residues 420 to 440; that stretch reads LVSFGYACLLVATLVSIVFTV. The Cytoplasmic segment spans residues 441–448; that stretch reads EKSQQGTM. Residues 449 to 469 traverse the membrane as a helical segment; the sequence is TGVFYLWRSIGNVLGASLTLV. Residues 470–528 are Vacuolar-facing; that stretch reads SYENSLSSMLWNYMFKTKRDDEYHFTKKQYYSLINDSSYLRGPNFPTDIFVRILDVYKK. N-linked (GlcNAc...) asparagine glycosylation is present at N504. The helical transmembrane segment at 529-549 threads the bilayer; sequence AFLISYIPNIALAAVGIVLSL. Topologically, residues 550 to 562 are cytoplasmic; that stretch reads YLVKHTYKRSSSS.

Belongs to the major facilitator superfamily.

It localises to the vacuole membrane. Its function is as follows. Transporter required for vacuolar uptake of at least histidine and lysine. The protein is Vacuolar basic amino acid transporter 1 (VBA1) of Saccharomyces cerevisiae (strain ATCC 204508 / S288c) (Baker's yeast).